A 466-amino-acid chain; its full sequence is Small RNA degrading nuclease 2 (466 aa).

One can recognise an Exonuclease domain in the interval 142-298 (MIAIDCEMVL…HDAEAAMKLV (157 aa)). Residues 426–466 (EENNASSKKRKRENHSKGTRDRRRCKPLSRRKQRSNVKRRR) are disordered. Residues 445-466 (RDRRRCKPLSRRKQRSNVKRRR) are compositionally biased toward basic residues.

This sequence belongs to the REXO1/REXO3 family.

It is found in the nucleus. In terms of biological role, 3'-5' exonuclease degrading single-stranded small RNAs. This chain is Small RNA degrading nuclease 2 (SDN2), found in Arabidopsis thaliana (Mouse-ear cress).